The following is a 336-amino-acid chain: Putative ALA-interacting subunit 4 (336 aa).

A helical membrane pass occupies residues 36 to 56 (VILTFLVSGVVFIPLGVICLF). N94 carries N-linked (GlcNAc...) asparagine glycosylation. Residues 127–142 (RQDGQLRSPKDEHETK) are compositionally biased toward basic and acidic residues. A disordered region spans residues 127–148 (RQDGQLRSPKDEHETKSCAPED). N167 carries an N-linked (GlcNAc...) asparagine glycan. A helical transmembrane segment spans residues 290–310 (FLGIAYLTVGSICLFLAVSFS). N329 carries N-linked (GlcNAc...) asparagine glycosylation.

Belongs to the CDC50/LEM3 family. Expressed in flowers. May be restricted to pollen grains.

The protein resides in the membrane. The chain is Putative ALA-interacting subunit 4 (ALIS4) from Arabidopsis thaliana (Mouse-ear cress).